The chain runs to 497 residues: Probable pyruvate kinase, cytosolic isozyme (497 aa).

Arginine 37 lines the substrate pocket. Positions 39, 41, 71, and 72 each coordinate K(+). 39–42 (NFSH) is an ATP binding site. ATP contacts are provided by arginine 78 and lysine 163. Lysine 227 contacts substrate. Glutamate 229 provides a ligand contact to Mg(2+). Glycine 252, aspartate 253, and threonine 285 together coordinate substrate. Mg(2+) is bound at residue aspartate 253.

Belongs to the pyruvate kinase family. As to quaternary structure, homotetramer. Requires Mg(2+) as cofactor. The cofactor is K(+).

It localises to the cytoplasm. The protein localises to the cytosol. The enzyme catalyses pyruvate + ATP = phosphoenolpyruvate + ADP + H(+). It functions in the pathway carbohydrate degradation; glycolysis; pyruvate from D-glyceraldehyde 3-phosphate: step 5/5. Its function is as follows. Key regulatory enzyme of the glycolytic pathway that catalyzes the final step of glycolysis, converting ADP and phosphoenolpyruvate (PEP) to ATP and pyruvate by essentially irreversible transphosphorylation. The protein is Probable pyruvate kinase, cytosolic isozyme of Arabidopsis thaliana (Mouse-ear cress).